Consider the following 200-residue polypeptide: Thymidine kinase (200 aa).

Residues 15–22 and 88–91 each bind ATP; these read GSMFSGKS and DEVQ. Glu89 serves as the catalytic Proton acceptor. Zn(2+) contacts are provided by Cys145, Cys148, Cys183, and His186.

The protein belongs to the thymidine kinase family. As to quaternary structure, homotetramer.

Its subcellular location is the cytoplasm. It carries out the reaction thymidine + ATP = dTMP + ADP + H(+). The sequence is that of Thymidine kinase from Bacillus pumilus (strain SAFR-032).